Reading from the N-terminus, the 159-residue chain is Transcription elongation factor GreA (159 aa).

It belongs to the GreA/GreB family.

Functionally, necessary for efficient RNA polymerase transcription elongation past template-encoded arresting sites. The arresting sites in DNA have the property of trapping a certain fraction of elongating RNA polymerases that pass through, resulting in locked ternary complexes. Cleavage of the nascent transcript by cleavage factors such as GreA or GreB allows the resumption of elongation from the new 3'terminus. GreA releases sequences of 2 to 3 nucleotides. The chain is Transcription elongation factor GreA from Mycoplasmoides gallisepticum (strain R(low / passage 15 / clone 2)) (Mycoplasma gallisepticum).